Consider the following 462-residue polypeptide: Squalene synthase ERG9 (462 aa).

A helical membrane pass occupies residues Ala-406–Gly-426.

It belongs to the phytoene/squalene synthase family. Requires Mg(2+) as cofactor.

It is found in the endoplasmic reticulum membrane. Its subcellular location is the microsome. The catalysed reaction is 2 (2E,6E)-farnesyl diphosphate + NADPH + H(+) = squalene + 2 diphosphate + NADP(+). The enzyme catalyses 2 (2E,6E)-farnesyl diphosphate + NADH + H(+) = squalene + 2 diphosphate + NAD(+). It functions in the pathway terpene metabolism; lanosterol biosynthesis; lanosterol from farnesyl diphosphate: step 1/3. It participates in steroid metabolism; ergosterol biosynthesis. In terms of biological role, squalene synthase; part of the third module of ergosterol biosynthesis pathway that includes the late steps of the pathway. ERG9 produces squalene from 2 farnesyl pyrophosphate moieties. The third module or late pathway involves the ergosterol synthesis itself through consecutive reactions that mainly occur in the endoplasmic reticulum (ER) membrane. Firstly, the squalene synthase ERG9 catalyzes the condensation of 2 farnesyl pyrophosphate moieties to form squalene, which is the precursor of all steroids. Squalene synthase is crucial for balancing the incorporation of farnesyl diphosphate (FPP) into sterol and nonsterol isoprene synthesis. Secondly, squalene is converted into lanosterol by the consecutive action of the squalene epoxidase ERG1 and the lanosterol synthase ERG7. Then, the delta(24)-sterol C-methyltransferase ERG6 methylates lanosterol at C-24 to produce eburicol. Eburicol is the substrate of the sterol 14-alpha demethylase encoded by CYP51A, CYP51B and CYP51C, to yield 4,4,24-trimethyl ergosta-8,14,24(28)-trienol. CYP51B encodes the enzyme primarily responsible for sterol 14-alpha-demethylation, and plays an essential role in ascospore formation. CYP51A encodes an additional sterol 14-alpha-demethylase, induced on ergosterol depletion and responsible for the intrinsic variation in azole sensitivity. The third CYP51 isoform, CYP51C, does not encode a sterol 14-alpha-demethylase, but is required for full virulence on host wheat ears. The C-14 reductase ERG24 then reduces the C14=C15 double bond which leads to 4,4-dimethylfecosterol. A sequence of further demethylations at C-4, involving the C-4 demethylation complex containing the C-4 methylsterol oxidases ERG25, the sterol-4-alpha-carboxylate 3-dehydrogenase ERG26 and the 3-keto-steroid reductase ERG27, leads to the production of fecosterol via 4-methylfecosterol. ERG28 has a role as a scaffold to help anchor ERG25, ERG26 and ERG27 to the endoplasmic reticulum. The C-8 sterol isomerase ERG2 then catalyzes the reaction which results in unsaturation at C-7 in the B ring of sterols and thus converts fecosterol to episterol. The sterol-C5-desaturases ERG3A and ERG3BB then catalyze the introduction of a C-5 double bond in the B ring to produce 5-dehydroepisterol. The C-22 sterol desaturases ERG5A and ERG5B further convert 5-dehydroepisterol into ergosta-5,7,22,24(28)-tetraen-3beta-ol by forming the C-22(23) double bond in the sterol side chain. Finally, ergosta-5,7,22,24(28)-tetraen-3beta-ol is substrate of the C-24(28) sterol reductase ERG4 to produce ergosterol. This chain is Squalene synthase ERG9, found in Gibberella zeae (strain ATCC MYA-4620 / CBS 123657 / FGSC 9075 / NRRL 31084 / PH-1) (Wheat head blight fungus).